Consider the following 100-residue polypeptide: Urease subunit gamma (100 aa).

The protein belongs to the urease gamma subunit family. Heterotrimer of UreA (gamma), UreB (beta) and UreC (alpha) subunits. Three heterotrimers associate to form the active enzyme.

The protein localises to the cytoplasm. It carries out the reaction urea + 2 H2O + H(+) = hydrogencarbonate + 2 NH4(+). The protein operates within nitrogen metabolism; urea degradation; CO(2) and NH(3) from urea (urease route): step 1/1. The polypeptide is Urease subunit gamma (Yersinia aldovae).